We begin with the raw amino-acid sequence, 274 residues long: 2,3,4,5-tetrahydropyridine-2,6-dicarboxylate N-succinyltransferase (274 aa).

The protein belongs to the transferase hexapeptide repeat family.

It is found in the cytoplasm. The enzyme catalyses (S)-2,3,4,5-tetrahydrodipicolinate + succinyl-CoA + H2O = (S)-2-succinylamino-6-oxoheptanedioate + CoA. Its pathway is amino-acid biosynthesis; L-lysine biosynthesis via DAP pathway; LL-2,6-diaminopimelate from (S)-tetrahydrodipicolinate (succinylase route): step 1/3. This chain is 2,3,4,5-tetrahydropyridine-2,6-dicarboxylate N-succinyltransferase, found in Escherichia coli (strain SMS-3-5 / SECEC).